The following is a 204-amino-acid chain: Thymidylate kinase (204 aa).

ATP is bound at residue 11–18 (GLDKSGKT).

This sequence belongs to the thymidylate kinase family.

It carries out the reaction dTMP + ATP = dTDP + ADP. Its pathway is pyrimidine metabolism; dTTP biosynthesis. The sequence is that of Thymidylate kinase (TMK) from Cowpox virus (strain GRI-90 / Grishak) (CPV).